Here is a 142-residue protein sequence, read N- to C-terminus: Transcriptional regulator MraZ (142 aa).

2 SpoVT-AbrB domains span residues 5 to 47 and 76 to 119; these read EFQH…PQHE and ATEC…SKEE.

It belongs to the MraZ family. Forms oligomers.

It localises to the cytoplasm. It is found in the nucleoid. The chain is Transcriptional regulator MraZ from Desulforamulus reducens (strain ATCC BAA-1160 / DSM 100696 / MI-1) (Desulfotomaculum reducens).